Here is a 690-residue protein sequence, read N- to C-terminus: Signal peptide peptidase-like 2C (690 aa).

The signal sequence occupies residues 1-28 (MACLGSLHPLGSLLLLFLLLLLSPEARG). Topologically, residues 29–192 (EYGLVRVVSK…APLEPVTDYN (164 aa)) are lumenal. Residues 87–166 (DSSPRQRPLH…AVLRYTDMLD (80 aa)) form the PA domain. A glycan (N-linked (GlcNAc...) asparagine) is linked at Asn106. Residues 193 to 213 (MAIIFILAVGTVAAGGYWAGL) traverse the membrane as a helical segment. The Cytoplasmic segment spans residues 214–260 (MEANKLQRRQAQRGGGLGGHNQQQTVAAERSQRAWEDDDFEDAPMDF). A helical transmembrane segment spans residues 261–283 (TPAMTGAVVTMSCSIMILLYFFY). Residue Asp284 is a topological domain, lumenal. A helical transmembrane segment spans residues 285 to 307 (CFVYVMIGIFSLGASTGLYSCLA). The Cytoplasmic portion of the chain corresponds to 308–328 (PILCHLPLWRYQWVLPGQRVS). The helical transmembrane segment at 329–349 (VTWPLLLLAGLCAMVTVLWVI) threads the bilayer. The Lumenal segment spans residues 350-354 (HRNED). The chain crosses the membrane as a helical span at residues 355 to 373 (HWAWLLQDTLGVAYCLFVL). Residues 374–384 (RRVRLPTFKNC) are Cytoplasmic-facing. A helical transmembrane segment spans residues 385–405 (TLFLLALLAFDVFFVFITPLF). Asp395 is a catalytic residue. Topologically, residues 406-448 (TKTGESIMVEVASGPADSSSHERLPMVLKVPRLSFSALTLCNQ) are lumenal. Residues 449–469 (PFSILGFGDIVVPGFLVAYCH) form a helical membrane-spanning segment. The active site involves Asp457. Residues 470 to 482 (RFDMQVQSRQVYY) are Cytoplasmic-facing. The helical transmembrane segment at 483 to 503 (MACTVAYAVGLLVTFVAMILM) threads the bilayer. Position 504 (Gln504) is a topological domain, lumenal. A helical membrane pass occupies residues 505-525 (MGQPALLYLVSSTLLTSLAVA). Positions 508–510 (PAL) match the PAL motif. Residues 526–690 (TCRQEFTLFW…KKSMSAQAPL (165 aa)) are Cytoplasmic-facing. Basic and acidic residues predominate over residues 564–573 (EDAKDSRTTN). The interval 564 to 633 (EDAKDSRTTN…DPNELPSGSP (70 aa)) is disordered. The span at 615–624 (SEGWSDTNLD) shows a compositional bias: polar residues.

This sequence belongs to the peptidase A22B family. In terms of assembly, interacts (via active sites) with FREY; the interaction stabilizes FREY1 protein and inhibits SPPL2C proteolytic activity. Post-translationally, glycosylated. Highly expressed in testis where it is primarily localised in spermatids (at protein level).

It localises to the endoplasmic reticulum membrane. Functionally, sperm-specific intramembrane-cleaving aspartic protease (I-CLiP) that cleaves distinct tail-anchored proteins and SNARE proteins. In elongated spermatids, modulates intracellular Ca(2+) homeostasis by controlling PLN abundance through proteolytic cleavage. During spermatogenesis, processes SNARE proteins and impacts vesicular trafficking which supports compartmental reorganization in maturating spermatids and may play a role in formation of the acrosome. Its function is as follows. In round spermatids, acts as a scaffold protein supporting FREY1 in IZUMO1 recruitment at the endoplasmic reticulum membrane and coordination of IZUMO1 complex assembly. Stabilizes FREY1 at the endoplasmic reticulum membrane through interaction. May recruit IZUMO1 interaction partners. In terms of biological role, no difference in cleavage specificity compared to isoform 1. In Mus musculus (Mouse), this protein is Signal peptide peptidase-like 2C.